The primary structure comprises 1368 residues: DNA-directed RNA polymerase subunit beta (1368 aa).

This sequence belongs to the RNA polymerase beta chain family. In terms of assembly, the RNAP catalytic core consists of 2 alpha, 1 beta, 1 beta' and 1 omega subunit. When a sigma factor is associated with the core the holoenzyme is formed, which can initiate transcription.

The enzyme catalyses RNA(n) + a ribonucleoside 5'-triphosphate = RNA(n+1) + diphosphate. DNA-dependent RNA polymerase catalyzes the transcription of DNA into RNA using the four ribonucleoside triphosphates as substrates. The chain is DNA-directed RNA polymerase subunit beta from Burkholderia ambifaria (strain ATCC BAA-244 / DSM 16087 / CCUG 44356 / LMG 19182 / AMMD) (Burkholderia cepacia (strain AMMD)).